A 1175-amino-acid chain; its full sequence is DNA-directed RNA polymerase subunit beta (1175 aa).

The disordered stretch occupies residues 1142–1175; it reads PMELSGSDDDEFDQAGASLGINLSRDERSDADIA. Positions 1165-1175 are enriched in basic and acidic residues; sequence SRDERSDADIA.

It belongs to the RNA polymerase beta chain family. The RNAP catalytic core consists of 2 alpha, 1 beta, 1 beta' and 1 omega subunit. When a sigma factor is associated with the core the holoenzyme is formed, which can initiate transcription.

It catalyses the reaction RNA(n) + a ribonucleoside 5'-triphosphate = RNA(n+1) + diphosphate. In terms of biological role, DNA-dependent RNA polymerase catalyzes the transcription of DNA into RNA using the four ribonucleoside triphosphates as substrates. This is DNA-directed RNA polymerase subunit beta from Corynebacterium diphtheriae (strain ATCC 700971 / NCTC 13129 / Biotype gravis).